The following is a 285-amino-acid chain: Protein phosphatase 1 regulatory subunit 3B (285 aa).

Residues 62 to 65 carry the PP1-binding motif motif; it reads RVSF. In terms of domain architecture, CBM21 spans 125–233; that stretch reads RNRLQADHVC…SNRGKNYRII (109 aa). Ser261 is modified (phosphoserine).

Interacts with glycogen, PPP1CC catalytic subunit of PP1 and PYGL. Associates with glycogen particles. Forms complexes with debranching enzyme, glycogen phosphorylase, glycogen synthase and phosphorylase kinase which is necessary for its regulation of PP1 activity. Highly expressed in the liver and, at lower levels, in skeletal muscle, including in vastus lateralis, gastrocnemius and soleus (at protein level). Highest mRNA levels are observed in skeletal muscle, and only moderate levels in liver and heart. Weak expression in placenta and lung.

Functionally, acts as a glycogen-targeting subunit for phosphatase PP1. Facilitates interaction of the PP1 with enzymes of the glycogen metabolism and regulates its activity. Suppresses the rate at which PP1 dephosphorylates (inactivates) glycogen phosphorylase and enhances the rate at which it activates glycogen synthase and therefore limits glycogen breakdown. Its activity is inhibited by PYGL, resulting in inhibition of the glycogen synthase and glycogen phosphorylase phosphatase activities of PP1. Dramatically increases basal and insulin-stimulated glycogen synthesis upon overexpression in hepatocytes. In Homo sapiens (Human), this protein is Protein phosphatase 1 regulatory subunit 3B (PPP1R3B).